A 68-amino-acid chain; its full sequence is Purkinje cell protein 4-like protein 1 (68 aa).

The span at 1 to 16 (MSELNTKTSPATNQAA) shows a compositional bias: polar residues. Positions 1 to 45 (MSELNTKTSPATNQAAGQEEKGKAGNVKKAEEEEEIDIDLTAPET) are disordered. The residue at position 8 (Thr8) is a Phosphothreonine. The segment covering 18–31 (QEEKGKAGNVKKAE) has biased composition (basic and acidic residues). Residues 45-68 (TEKAALAIQGKFRRFQKRKKDPSS) enclose the IQ domain.

Belongs to the PCP4 family.

This Homo sapiens (Human) protein is Purkinje cell protein 4-like protein 1 (PCP4L1).